A 286-amino-acid chain; its full sequence is Thymidylate synthase (286 aa).

Arg27 lines the dUMP pocket. His57 is a (6R)-5,10-methylene-5,6,7,8-tetrahydrofolate binding site. 148 to 149 lines the dUMP pocket; that stretch reads RR. The active-site Nucleophile is the Cys168. DUMP is bound by residues 188–191, Asn199, and 229–231; these read RSAD and HLY. Position 191 (Asp191) interacts with (6R)-5,10-methylene-5,6,7,8-tetrahydrofolate. Residue Ala285 coordinates (6R)-5,10-methylene-5,6,7,8-tetrahydrofolate.

Belongs to the thymidylate synthase family. Bacterial-type ThyA subfamily. In terms of assembly, homodimer.

The protein resides in the cytoplasm. It catalyses the reaction dUMP + (6R)-5,10-methylene-5,6,7,8-tetrahydrofolate = 7,8-dihydrofolate + dTMP. Its pathway is pyrimidine metabolism; dTTP biosynthesis. Its function is as follows. Catalyzes the reductive methylation of 2'-deoxyuridine-5'-monophosphate (dUMP) to 2'-deoxythymidine-5'-monophosphate (dTMP) while utilizing 5,10-methylenetetrahydrofolate (mTHF) as the methyl donor and reductant in the reaction, yielding dihydrofolate (DHF) as a by-product. This enzymatic reaction provides an intracellular de novo source of dTMP, an essential precursor for DNA biosynthesis. This Psychrobacter sp. (strain PRwf-1) protein is Thymidylate synthase.